Reading from the N-terminus, the 393-residue chain is NAD(P)H-quinone oxidoreductase subunit H, chloroplastic (393 aa).

The protein belongs to the complex I 49 kDa subunit family. As to quaternary structure, NDH is composed of at least 16 different subunits, 5 of which are encoded in the nucleus.

It localises to the plastid. Its subcellular location is the chloroplast thylakoid membrane. The enzyme catalyses a plastoquinone + NADH + (n+1) H(+)(in) = a plastoquinol + NAD(+) + n H(+)(out). It catalyses the reaction a plastoquinone + NADPH + (n+1) H(+)(in) = a plastoquinol + NADP(+) + n H(+)(out). In terms of biological role, NDH shuttles electrons from NAD(P)H:plastoquinone, via FMN and iron-sulfur (Fe-S) centers, to quinones in the photosynthetic chain and possibly in a chloroplast respiratory chain. The immediate electron acceptor for the enzyme in this species is believed to be plastoquinone. Couples the redox reaction to proton translocation, and thus conserves the redox energy in a proton gradient. The polypeptide is NAD(P)H-quinone oxidoreductase subunit H, chloroplastic (Solanum lycopersicum (Tomato)).